Here is a 347-residue protein sequence, read N- to C-terminus: Heat-inducible transcription repressor HrcA (347 aa).

The protein belongs to the HrcA family.

Functionally, negative regulator of class I heat shock genes (grpE-dnaK-dnaJ and groELS operons). Prevents heat-shock induction of these operons. In Lactococcus lactis subsp. cremoris (strain SK11), this protein is Heat-inducible transcription repressor HrcA.